We begin with the raw amino-acid sequence, 196 residues long: Holliday junction resolvase RecU (196 aa).

Mg(2+) contacts are provided by T82, D84, E97, and Q116.

It belongs to the RecU family. Mg(2+) serves as cofactor.

The protein resides in the cytoplasm. It carries out the reaction Endonucleolytic cleavage at a junction such as a reciprocal single-stranded crossover between two homologous DNA duplexes (Holliday junction).. Its function is as follows. Endonuclease that resolves Holliday junction intermediates in genetic recombination. Cleaves mobile four-strand junctions by introducing symmetrical nicks in paired strands. Promotes annealing of linear ssDNA with homologous dsDNA. Required for DNA repair, homologous recombination and chromosome segregation. This chain is Holliday junction resolvase RecU, found in Oceanobacillus iheyensis (strain DSM 14371 / CIP 107618 / JCM 11309 / KCTC 3954 / HTE831).